The following is a 533-amino-acid chain: Intestinal-type alkaline phosphatase (533 aa).

Positions 1-19 (MQGACVLLLLGLHLQLSLG) are cleaved as a signal peptide. Asp61 serves as a coordination point for Mg(2+). 2 residues coordinate Zn(2+): Asp61 and Ser111. The active-site Phosphoserine intermediate is Ser111. Cys140 and Cys202 form a disulfide bridge. Ser174 contacts Mg(2+). Glu235 contacts Ca(2+). The N-linked (GlcNAc...) asparagine glycan is linked to Asn268. Residues Phe288, Glu289, and Asp304 each contribute to the Ca(2+) site. A Mg(2+)-binding site is contributed by Glu330. Positions 335, 339, 376, and 377 each coordinate Zn(2+). N-linked (GlcNAc...) asparagine glycosylation is present at Asn429. Residue His451 coordinates Zn(2+). An intrachain disulfide couples Cys486 to Cys493. Asp506 is lipidated: GPI-anchor amidated aspartate. Residues 507–533 (AAHLAASPPPLALLAGAMLLLLAPTLY) constitute a propeptide, removed in mature form.

It belongs to the alkaline phosphatase family. In terms of assembly, homodimer. It depends on Mg(2+) as a cofactor. Requires Zn(2+) as cofactor. Ca(2+) serves as cofactor.

It localises to the cell membrane. It catalyses the reaction a phosphate monoester + H2O = an alcohol + phosphate. In terms of biological role, alkaline phosphatase that can hydrolyze various phosphate compounds. The polypeptide is Intestinal-type alkaline phosphatase (ALPI) (Bos taurus (Bovine)).